Here is a 211-residue protein sequence, read N- to C-terminus: Outer-membrane lipoprotein carrier protein (211 aa).

Positions 1 to 24 (MRNRIIVSACAALAMFAIQAPAHA) are cleaved as a signal peptide.

Belongs to the LolA family. In terms of assembly, monomer.

It is found in the periplasm. Participates in the translocation of lipoproteins from the inner membrane to the outer membrane. Only forms a complex with a lipoprotein if the residue after the N-terminal Cys is not an aspartate (The Asp acts as a targeting signal to indicate that the lipoprotein should stay in the inner membrane). This Cupriavidus necator (strain ATCC 17699 / DSM 428 / KCTC 22496 / NCIMB 10442 / H16 / Stanier 337) (Ralstonia eutropha) protein is Outer-membrane lipoprotein carrier protein.